We begin with the raw amino-acid sequence, 70 residues long: MAIYRNRISPIKPTDAVDYKDIDLLRKFITEQGKILPKRSTGLTSKQQKKLTKAIKQARILSLLPFLNKD.

This sequence belongs to the bacterial ribosomal protein bS18 family. In terms of assembly, part of the 30S ribosomal subunit.

The protein localises to the plastid. It localises to the chloroplast. This chain is Small ribosomal subunit protein bS18c, found in Pyropia yezoensis (Susabi-nori).